Consider the following 605-residue polypeptide: Beta-conglycinin alpha subunit 1 (605 aa).

Residues 1–22 form the signal peptide; it reads MMRARFPLLLLGLVFLASVSVS. A propeptide spanning residues 23–62 is cleaved from the precursor; it reads FGIAYWEKENPKHNKCLQSCNSERDSYRNQACHARCNLLK. The disordered stretch occupies residues 65-195; that stretch reads KEECEEGEIP…ELRRHKNKNP (131 aa). The span at 111-136 shows a compositional bias: basic and acidic residues; sequence PRQEEEHEQREEQEWPRKEEKRGEKG. Acidic residues-rich tracts occupy residues 137 to 149 and 169 to 184; these read SEEE…EEQD and EDED…ESED. Cupin type-1 domains are found at residues 196 to 354 and 406 to 567; these read FLFG…EEIN and FNLR…QAVE. Residues asparagine 261 and asparagine 517 are each glycosylated (N-linked (GlcNAc...) asparagine).

Belongs to the 7S seed storage protein family. As to quaternary structure, the alpha-, alpha'-, and beta-subunits associate in various combinations to form trimeric proteins.

The protein resides in the vacuole. It is found in the aleurone grain. Its subcellular location is the endoplasmic reticulum. It localises to the protein storage vacuole. In terms of biological role, seed storage protein. Accumulates during seed development and is hydrolyzed after germination to provide a carbon and nitrogen source for the developing seedling. This chain is Beta-conglycinin alpha subunit 1, found in Glycine max (Soybean).